The sequence spans 151 residues: Transcriptional regulator MraZ (151 aa).

SpoVT-AbrB domains lie at 5-52 (ANAI…PLDE) and 81-124 (AVDL…DEDA).

Belongs to the MraZ family. As to quaternary structure, forms oligomers.

It is found in the cytoplasm. It localises to the nucleoid. In Pseudomonas fluorescens (strain ATCC BAA-477 / NRRL B-23932 / Pf-5), this protein is Transcriptional regulator MraZ.